The following is a 448-amino-acid chain: Methionine aminopeptidase 2-1 (448 aa).

Residues 1–90 (MAAQASEKLE…PPRVPVSSLF (90 aa)) are disordered. Residues 22 to 33 (AAGPAKAGQADA) are compositionally biased toward low complexity. Over residues 34 to 46 (GEVEDESDDDADD) the composition is skewed to acidic residues. A compositionally biased stretch (low complexity) spans 47 to 58 (AGAAADGAANGA). Residues 59 to 74 (AKKKKKRKSKKKKKGG) are compositionally biased toward basic residues. The segment covering 75–88 (AKVQSSPPRVPVSS) has biased composition (low complexity). His198 contributes to the substrate binding site. Positions 218, 229, and 301 each coordinate a divalent metal cation. A substrate-binding site is contributed by His309. Positions 334 and 429 each coordinate a divalent metal cation.

This sequence belongs to the peptidase M24A family. Methionine aminopeptidase eukaryotic type 2 subfamily. Co(2+) serves as cofactor. The cofactor is Zn(2+). Mn(2+) is required as a cofactor. Requires Fe(2+) as cofactor.

The protein localises to the cytoplasm. It catalyses the reaction Release of N-terminal amino acids, preferentially methionine, from peptides and arylamides.. Functionally, cotranslationally removes the N-terminal methionine from nascent proteins. The N-terminal methionine is often cleaved when the second residue in the primary sequence is small and uncharged (Met-Ala-, Cys, Gly, Pro, Ser, Thr, or Val). This Emericella nidulans (strain FGSC A4 / ATCC 38163 / CBS 112.46 / NRRL 194 / M139) (Aspergillus nidulans) protein is Methionine aminopeptidase 2-1.